A 488-amino-acid chain; its full sequence is Glutamyl-tRNA(Gln) amidotransferase subunit A (488 aa).

Residues Lys77 and Ser152 each act as charge relay system in the active site. The active-site Acyl-ester intermediate is Ser176.

It belongs to the amidase family. GatA subfamily. In terms of assembly, heterotrimer of A, B and C subunits.

It catalyses the reaction L-glutamyl-tRNA(Gln) + L-glutamine + ATP + H2O = L-glutaminyl-tRNA(Gln) + L-glutamate + ADP + phosphate + H(+). In terms of biological role, allows the formation of correctly charged Gln-tRNA(Gln) through the transamidation of misacylated Glu-tRNA(Gln) in organisms which lack glutaminyl-tRNA synthetase. The reaction takes place in the presence of glutamine and ATP through an activated gamma-phospho-Glu-tRNA(Gln). The protein is Glutamyl-tRNA(Gln) amidotransferase subunit A of Streptococcus pyogenes serotype M4 (strain MGAS10750).